A 549-amino-acid chain; its full sequence is Chaperonin GroEL 2 (549 aa).

ATP contacts are provided by residues 29–32 (TLGP), K50, 86–90 (DGTTT), G414, 477–479 (NAA), and D493.

Belongs to the chaperonin (HSP60) family. As to quaternary structure, forms a cylinder of 14 subunits composed of two heptameric rings stacked back-to-back. Interacts with the co-chaperonin GroES.

It is found in the cytoplasm. It carries out the reaction ATP + H2O + a folded polypeptide = ADP + phosphate + an unfolded polypeptide.. In terms of biological role, together with its co-chaperonin GroES, plays an essential role in assisting protein folding. The GroEL-GroES system forms a nano-cage that allows encapsulation of the non-native substrate proteins and provides a physical environment optimized to promote and accelerate protein folding. The protein is Chaperonin GroEL 2 of Myxococcus xanthus (strain DK1622).